The following is a 520-amino-acid chain: Arginine biosynthesis bifunctional protein ArgJ, chloroplastic (520 aa).

The substrate site is built by threonine 264, lysine 290, threonine 301, glutamate 388, asparagine 515, and threonine 520. Residue threonine 301 is the Nucleophile of the active site.

Belongs to the ArgJ family. In terms of assembly, heterodimer of an alpha and a beta chain.

Its subcellular location is the plastid. It is found in the chloroplast. The enzyme catalyses N(2)-acetyl-L-ornithine + L-glutamate = N-acetyl-L-glutamate + L-ornithine. The catalysed reaction is L-glutamate + acetyl-CoA = N-acetyl-L-glutamate + CoA + H(+). It functions in the pathway amino-acid biosynthesis; L-arginine biosynthesis; L-ornithine and N-acetyl-L-glutamate from L-glutamate and N(2)-acetyl-L-ornithine (cyclic): step 1/1. Its pathway is amino-acid biosynthesis; L-arginine biosynthesis; N(2)-acetyl-L-ornithine from L-glutamate: step 1/4. Functionally, catalyzes two activities which are involved in the cyclic version of arginine biosynthesis: the synthesis of acetylglutamate from glutamate and acetyl-CoA, and of ornithine by transacetylation between acetylornithine and glutamate. The sequence is that of Arginine biosynthesis bifunctional protein ArgJ, chloroplastic from Physcomitrium patens (Spreading-leaved earth moss).